The following is a 135-amino-acid chain: Ribonuclease VapC5 (135 aa).

Residues 9–130 (VLDTSVFIAT…FAALDGAASV (122 aa)) enclose the PINc domain. Mg(2+)-binding residues include aspartate 11 and aspartate 100.

Belongs to the PINc/VapC protein family. Forms a complex with VapB5. Mg(2+) serves as cofactor.

Its subcellular location is the secreted. Functionally, probable toxic component of a type II toxin-antitoxin (TA) system. The cognate antitoxin is VapB5. Has limited RNase activity on substrates; activity is seen with a VapC5-VapB5 complex. The polypeptide is Ribonuclease VapC5 (Mycobacterium tuberculosis (strain ATCC 25618 / H37Rv)).